The sequence spans 101 residues: MDKSKRPFLKFKRSFRRRLPPIQSGDRIDYRNMSLISRFISEQGKILSRRVNRLTLKQQRLITLAIKQARILSLLPFLNNEKQFERTESTARTTGFKARNK.

This sequence belongs to the bacterial ribosomal protein bS18 family. As to quaternary structure, part of the 30S ribosomal subunit.

The protein localises to the plastid. It is found in the chloroplast. This is Small ribosomal subunit protein bS18c from Solanum bulbocastanum (Wild potato).